The sequence spans 212 residues: ATP-dependent Clp protease proteolytic subunit (212 aa).

Ser-106 (nucleophile) is an active-site residue. His-131 is a catalytic residue.

The protein belongs to the peptidase S14 family. In terms of assembly, fourteen ClpP subunits assemble into 2 heptameric rings which stack back to back to give a disk-like structure with a central cavity, resembling the structure of eukaryotic proteasomes.

It is found in the cytoplasm. The catalysed reaction is Hydrolysis of proteins to small peptides in the presence of ATP and magnesium. alpha-casein is the usual test substrate. In the absence of ATP, only oligopeptides shorter than five residues are hydrolyzed (such as succinyl-Leu-Tyr-|-NHMec, and Leu-Tyr-Leu-|-Tyr-Trp, in which cleavage of the -Tyr-|-Leu- and -Tyr-|-Trp bonds also occurs).. Its function is as follows. Cleaves peptides in various proteins in a process that requires ATP hydrolysis. Has a chymotrypsin-like activity. Plays a major role in the degradation of misfolded proteins. This is ATP-dependent Clp protease proteolytic subunit from Rhodopseudomonas palustris (strain ATCC BAA-98 / CGA009).